The following is a 72-amino-acid chain: DNA gyrase inhibitor YacG (72 aa).

Positions 17, 20, 32, and 36 each coordinate Zn(2+). Residues 51–72 (IPGPEEEEMSYPPRSDDENRSR) are disordered.

It belongs to the DNA gyrase inhibitor YacG family. Interacts with GyrB. The cofactor is Zn(2+).

Functionally, inhibits all the catalytic activities of DNA gyrase by preventing its interaction with DNA. Acts by binding directly to the C-terminal domain of GyrB, which probably disrupts DNA binding by the gyrase. In Methylorubrum extorquens (strain PA1) (Methylobacterium extorquens), this protein is DNA gyrase inhibitor YacG.